The chain runs to 172 residues: MDLQEKIRVIENFPKEGISFKDITTLIADGEALRETINRIVKHLEDKKIDLIVGPEARGFIFGVPVAYALGVGFIPVRKPGKLPGETISVNYGLEYGEDQLQLHKDAIKPGQRVAVVDDLLATGGTVEGVAKLIEQAGGIVASLDFVIELTELKGKDKLEGYDVLSLVKYDI.

This sequence belongs to the purine/pyrimidine phosphoribosyltransferase family. Homodimer.

Its subcellular location is the cytoplasm. It catalyses the reaction AMP + diphosphate = 5-phospho-alpha-D-ribose 1-diphosphate + adenine. The protein operates within purine metabolism; AMP biosynthesis via salvage pathway; AMP from adenine: step 1/1. Its function is as follows. Catalyzes a salvage reaction resulting in the formation of AMP, that is energically less costly than de novo synthesis. In Clostridium beijerinckii (strain ATCC 51743 / NCIMB 8052) (Clostridium acetobutylicum), this protein is Adenine phosphoribosyltransferase.